Consider the following 425-residue polypeptide: Glycosyl hydrolase family 109 protein 2 (425 aa).

NAD(+) is bound by residues 29–30, E51, 99–102, 119–120, and N148; these read NR, WLTH, and EV. Y177 serves as a coordination point for substrate. Residues 194–198 and Y211 each bind NAD(+); that span reads FHNHW. Residues 211 to 214 and Y293 each bind substrate; that span reads YPTH.

Belongs to the Gfo/Idh/MocA family. Glycosyl hydrolase 109 subfamily. NAD(+) is required as a cofactor.

Functionally, glycosidase. This is Glycosyl hydrolase family 109 protein 2 from Bacteroides fragilis (strain YCH46).